The primary structure comprises 147 residues: Transthyretin (147 aa).

The N-terminal stretch at 1 to 20 (MASHRLLLLCLAGLVFVSEA) is a signal peptide. The residue at position 30 (C30) is a Sulfocysteine. Residue K35 participates in L-thyroxine binding. Residue S72 is modified to Phosphoserine. An L-thyroxine-binding site is contributed by E74. An N-linked (GlcNAc...) asparagine glycan is attached at N118. S137 contacts L-thyroxine.

This sequence belongs to the transthyretin family. As to quaternary structure, homotetramer. Dimer of dimers. In the homotetramer, subunits assemble around a central channel that can accommodate two ligand molecules. Interacts with RBP4. Sulfonation of the reactive cysteine Cys-30 enhances the stability of the native conformation of TTR, avoiding misassembly of the protein leading to amyloid formation.

It is found in the secreted. Its function is as follows. Thyroid hormone-binding protein. Probably transports thyroxine from the bloodstream to the brain. The chain is Transthyretin (TTR) from Macaca fascicularis (Crab-eating macaque).